The sequence spans 375 residues: 23S rRNA (uracil(747)-C(5))-methyltransferase RlmC (375 aa).

[4Fe-4S] cluster-binding residues include C3, C11, C14, and C87. The S-adenosyl-L-methionine site is built by Q212, F241, E262, and N307. C334 functions as the Nucleophile in the catalytic mechanism.

Belongs to the class I-like SAM-binding methyltransferase superfamily. RNA M5U methyltransferase family. RlmC subfamily.

It catalyses the reaction uridine(747) in 23S rRNA + S-adenosyl-L-methionine = 5-methyluridine(747) in 23S rRNA + S-adenosyl-L-homocysteine + H(+). Catalyzes the formation of 5-methyl-uridine at position 747 (m5U747) in 23S rRNA. This is 23S rRNA (uracil(747)-C(5))-methyltransferase RlmC from Escherichia coli O157:H7.